Consider the following 200-residue polypeptide: MIESTLPALALWGVIGYLLGSIPFGMVLAKVMGLGNLRDIGSGNIGATNVLRTGNKLAAALTLVLDGGKGVVAVLAARAAGGEDLAQIAGLMAMIGHCYPVWLRFAGGKGVATFLGIVLALAFPVGVGCCLAWLAGAFATRISSMGALVASVAAVPLAFLLGFPGAVVLLILLGALIFWRHRGNIARIRTGTEPKIGQKK.

The next 5 helical transmembrane spans lie at 8 to 28, 57 to 77, 88 to 108, 114 to 134, and 159 to 179; these read ALAL…GMVL, LAAA…VLAA, IAGL…FAGG, FLGI…LAWL, and FLLG…LIFW.

The protein belongs to the PlsY family. Probably interacts with PlsX.

Its subcellular location is the cell inner membrane. It carries out the reaction an acyl phosphate + sn-glycerol 3-phosphate = a 1-acyl-sn-glycero-3-phosphate + phosphate. It participates in lipid metabolism; phospholipid metabolism. Catalyzes the transfer of an acyl group from acyl-phosphate (acyl-PO(4)) to glycerol-3-phosphate (G3P) to form lysophosphatidic acid (LPA). This enzyme utilizes acyl-phosphate as fatty acyl donor, but not acyl-CoA or acyl-ACP. The polypeptide is Glycerol-3-phosphate acyltransferase (Roseobacter denitrificans (strain ATCC 33942 / OCh 114) (Erythrobacter sp. (strain OCh 114))).